A 255-amino-acid chain; its full sequence is Hydroxyacylglutathione hydrolase (255 aa).

Residues histidine 56, histidine 58, aspartate 60, histidine 61, histidine 114, aspartate 133, and histidine 171 each contribute to the Zn(2+) site.

Belongs to the metallo-beta-lactamase superfamily. Glyoxalase II family. Monomer. Requires Zn(2+) as cofactor.

The enzyme catalyses an S-(2-hydroxyacyl)glutathione + H2O = a 2-hydroxy carboxylate + glutathione + H(+). The protein operates within secondary metabolite metabolism; methylglyoxal degradation; (R)-lactate from methylglyoxal: step 2/2. Thiolesterase that catalyzes the hydrolysis of S-D-lactoyl-glutathione to form glutathione and D-lactic acid. The protein is Hydroxyacylglutathione hydrolase of Fuscovulum blasticum (Rhodobacter blasticus).